Reading from the N-terminus, the 292-residue chain is Probable alpha-L-glutamate ligase (292 aa).

The ATP-grasp domain maps to H104–E287. ATP is bound by residues K141, E178–F179, D187, and R211–N213. Mg(2+) contacts are provided by D248, E260, and N262. Mn(2+) is bound by residues D248, E260, and N262.

It belongs to the RimK family. It depends on Mg(2+) as a cofactor. Mn(2+) serves as cofactor.

This is Probable alpha-L-glutamate ligase from Stenotrophomonas maltophilia (strain R551-3).